A 303-amino-acid chain; its full sequence is Putative CRISPR-associated endonuclease Cas1 2 (303 aa).

Glu149 serves as a coordination point for Mn(2+).

Belongs to the CRISPR-associated endonuclease Cas1 family. Homodimer, forms a heterotetramer with a Cas2 homodimer. It depends on Mg(2+) as a cofactor. Mn(2+) is required as a cofactor.

CRISPR (clustered regularly interspaced short palindromic repeat), is an adaptive immune system that provides protection against mobile genetic elements (viruses, transposable elements and conjugative plasmids). CRISPR clusters contain sequences complementary to antecedent mobile elements and target invading nucleic acids. CRISPR clusters are transcribed and processed into CRISPR RNA (crRNA). Acts as a dsDNA endonuclease. Involved in the integration of spacer DNA into the CRISPR cassette. In Methanospirillum hungatei JF-1 (strain ATCC 27890 / DSM 864 / NBRC 100397 / JF-1), this protein is Putative CRISPR-associated endonuclease Cas1 2.